A 527-amino-acid polypeptide reads, in one-letter code: Peptide chain release factor 3 (527 aa).

Residues 9–277 (AKRRTFAIIS…AVVNWAPKPL (269 aa)) enclose the tr-type G domain. Residues 18 to 25 (SHPDAGKT), 86 to 90 (DTPGH), and 140 to 143 (NKLD) contribute to the GTP site.

Belongs to the TRAFAC class translation factor GTPase superfamily. Classic translation factor GTPase family. PrfC subfamily.

It is found in the cytoplasm. Its function is as follows. Increases the formation of ribosomal termination complexes and stimulates activities of RF-1 and RF-2. It binds guanine nucleotides and has strong preference for UGA stop codons. It may interact directly with the ribosome. The stimulation of RF-1 and RF-2 is significantly reduced by GTP and GDP, but not by GMP. This chain is Peptide chain release factor 3, found in Pseudomonas savastanoi pv. phaseolicola (strain 1448A / Race 6) (Pseudomonas syringae pv. phaseolicola (strain 1448A / Race 6)).